The sequence spans 114 residues: TYRO protein tyrosine kinase-binding protein (114 aa).

Residues 1 to 27 (MGAPEPSWCFLFLPVLLTVGGLSPVQA) form the signal peptide. Over 28 to 42 (QSDNYPGCECSSVSP) the chain is Extracellular. A helical membrane pass occupies residues 43–63 (GVLAGIVLGDLVLTLLIALAV). Residue Asp-52 participates in Ca(2+) binding. Residues 64 to 114 (YSLGRLVSRGRGTADGTRKQHMAETESPYQELQGQRPEVYSDLNTQRQYYR) are Cytoplasmic-facing. A disordered region spans residues 72–114 (RGRGTADGTRKQHMAETESPYQELQGQRPEVYSDLNTQRQYYR). Residues 81–109 (RKQHMAETESPYQELQGQRPEVYSDLNTQ) enclose the ITAM domain. Residues Tyr-92 and Tyr-103 each carry the phosphotyrosine modification. The segment covering 105-114 (DLNTQRQYYR) has biased composition (polar residues).

Belongs to the TYROBP family. Homodimer; disulfide-linked. Homotrimer; disulfide-linked. Homotetramer; disulfide-linked. Homotrimers and homotetramers form when low levels of partner receptors are available and is competitive with assembly with interacting receptors. They may represent alternative oligomerization states or may be intermediates in the receptor assembly process. Binding of a metal cation aids in homooligomerization through coordination of the metal ion by the subunits of the oligomer. Interacts with TREM1. Interacts with TREM2. Interacts with CLECSF5. Interacts with CD300LB and CD300C2. Interacts with CD300E. Interacts (via ITAM domain) with SYK (via SH2 domains); activates SYK mediating neutrophils and macrophages integrin-mediated activation. Interacts with KLRC2. Interacts with CD300H. Interacts with KLRD1. Interacts with SIGLEC1. Following ligand binding by associated receptors, tyrosine phosphorylated in the ITAM domain which leads to activation of additional tyrosine kinases and subsequent cell activation.

It localises to the cell membrane. Adapter protein which non-covalently associates with activating receptors found on the surface of a variety of immune cells to mediate signaling and cell activation following ligand binding by the receptors. TYROBP is tyrosine-phosphorylated in the ITAM domain following ligand binding by the associated receptors which leads to activation of additional tyrosine kinases and subsequent cell activation. Also has an inhibitory role in some cells. Non-covalently associates with activating receptors of the CD300 family to mediate cell activation. Also mediates cell activation through association with activating receptors of the CD200R family. Required for neutrophil activation mediated by integrin. Required for the activation of myeloid cells mediated by the CLEC5A/MDL1 receptor. Associates with natural killer (NK) cell receptors such as the KLRD1/KLRC2 heterodimer to mediate NK cell activation. Associates with TREM1 to mediate activation of neutrophils and monocytes. Associates with TREM2 on monocyte-derived dendritic cells to mediate up-regulation of chemokine receptor CCR7 and dendritic cell maturation and survival. PAssociation with TREM2 mediates cytokine-induced formation of multinucleated giant cells which are formed by the fusion of macrophages. Stabilizes the TREM2 C-terminal fragment (TREM2-CTF) produced by TREM2 ectodomain shedding which suppresses the release of pro-inflammatory cytokines. In microglia, required with TREM2 for phagocytosis of apoptotic neurons. Required with ITGAM/CD11B in microglia to control production of microglial superoxide ions which promote the neuronal apoptosis that occurs during brain development. Promotes pro-inflammatory responses in microglia following nerve injury which accelerates degeneration of injured neurons. ositively regulates the expression of the IRAK3/IRAK-M kinase and IL10 production by liver dendritic cells and inhibits their T cell allosimulatory ability. Negatively regulates B cell proliferation. Required for CSF1-mediated osteoclast cytoskeletal organization. Positively regulates multinucleation during osteoclast development. This chain is TYRO protein tyrosine kinase-binding protein, found in Rattus norvegicus (Rat).